The sequence spans 468 residues: Secreted triacylglycerol lipase LIP7 (468 aa).

The first 21 residues, 1–21, serve as a signal peptide directing secretion; that stretch reads MFPRQILVFAALGLCFALVAG. Cysteines 125 and 295 form a disulfide. Residue S209 is the Nucleophile of the active site. Residues D355 and H389 contribute to the active site.

It belongs to the AB hydrolase superfamily. Lipase family. Class Lip subfamily.

The protein localises to the secreted. It is found in the cell wall. The enzyme catalyses a triacylglycerol + H2O = a diacylglycerol + a fatty acid + H(+). The catalysed reaction is a monoacylglycerol + H2O = glycerol + a fatty acid + H(+). It carries out the reaction a diacylglycerol + H2O = a monoacylglycerol + a fatty acid + H(+). Functionally, secreted lipase involved in Dandruff and seborrheic dermatitis (D/SD) probably via lipase-mediated breakdown of sebaceous lipids and release of irritating free fatty acids. Has triacylglycerol lipase activity and is able to hydrolyze triolein. Mostly converts monoolein to di- and triolein, while free fatty acids are only produced in low amounts. This Malassezia globosa (strain ATCC MYA-4612 / CBS 7966) (Dandruff-associated fungus) protein is Secreted triacylglycerol lipase LIP7.